The following is a 323-amino-acid chain: CD-NTase-associated protein 12 (323 aa).

In terms of domain architecture, TIR spans 4–120 (RIFIGSSSEQ…LDGITVAKFT (117 aa)). E84 is an active-site residue. Positions 154 to 323 (STALAIGYYN…YVNVLTNVKL (170 aa)) are STING domain. 3',3'-c-di-GMP-binding residues include S164, F165, R234, P237, D259, S262, and T263.

The protein in the C-terminal section; belongs to the bacterial STING family. Forms homodimers which subsequently form filaments. In vitro in the presence of c-di-GMP forms filaments up to 300 nm in length with an ordered array of parallel-stacked subunits, where the TIR domains form one face of the filament and the STING domains form the other face. Antiparallel double-filament structures are also seen. 3'3'-cGAMP weakly induces filament formation, while 2'3'-cGAMP does not.

It catalyses the reaction NAD(+) + H2O = ADP-D-ribose + nicotinamide + H(+). With respect to regulation, NAD(+) hydrolase activity is strongly stimulated by c-di-GMP, weakly by 3'3'-cGAMP, very weakly by c-di-AMP and not at all by 2'3'-cGAMP. Self-association of TIR domains is required for NADase activity. Functionally, effector protein of a CBASS antiviral system with NAD(+) hydrolase activity. CBASS (cyclic oligonucleotide-based antiphage signaling system) provides immunity against bacteriophage. The CD-NTase protein synthesizes cyclic nucleotides in response to infection; these serve as specific second messenger signals. The signals activate a diverse range of effectors, leading to bacterial cell death and thus abortive phage infection. A type I-D(GG) CBASS system. Upon activation by 3'3'-c-di-GMP forms filaments which hydrolyze NAD(+); filament formation is required for enzyme activation. Induction in an E.coli strain that synthesizes c-di-GMP leads to significant growth inhibition. Binds c-di-GMP and 3'3'-cGAMP (3'3'-cyclic GMP-AMP), but not c-di-AMP, 2'3'-cGAMP or cUMP-AMP. This chain is CD-NTase-associated protein 12, found in Sphingobacterium faecium (strain DSM 11690 / JCM 21820 / NBRC 15299 / NCIMB 13408 / KS 0470).